A 283-amino-acid polypeptide reads, in one-letter code: Phosphatidylserine decarboxylase proenzyme (283 aa).

Active-site charge relay system; for autoendoproteolytic cleavage activity residues include Asp-90, His-143, and Ser-248. Ser-248 acts as the Schiff-base intermediate with substrate; via pyruvic acid; for decarboxylase activity in catalysis. At Ser-248 the chain carries Pyruvic acid (Ser); by autocatalysis.

This sequence belongs to the phosphatidylserine decarboxylase family. PSD-B subfamily. Prokaryotic type I sub-subfamily. In terms of assembly, heterodimer of a large membrane-associated beta subunit and a small pyruvoyl-containing alpha subunit. Pyruvate serves as cofactor. Is synthesized initially as an inactive proenzyme. Formation of the active enzyme involves a self-maturation process in which the active site pyruvoyl group is generated from an internal serine residue via an autocatalytic post-translational modification. Two non-identical subunits are generated from the proenzyme in this reaction, and the pyruvate is formed at the N-terminus of the alpha chain, which is derived from the carboxyl end of the proenzyme. The autoendoproteolytic cleavage occurs by a canonical serine protease mechanism, in which the side chain hydroxyl group of the serine supplies its oxygen atom to form the C-terminus of the beta chain, while the remainder of the serine residue undergoes an oxidative deamination to produce ammonia and the pyruvoyl prosthetic group on the alpha chain. During this reaction, the Ser that is part of the protease active site of the proenzyme becomes the pyruvoyl prosthetic group, which constitutes an essential element of the active site of the mature decarboxylase.

Its subcellular location is the cell membrane. The enzyme catalyses a 1,2-diacyl-sn-glycero-3-phospho-L-serine + H(+) = a 1,2-diacyl-sn-glycero-3-phosphoethanolamine + CO2. The protein operates within phospholipid metabolism; phosphatidylethanolamine biosynthesis; phosphatidylethanolamine from CDP-diacylglycerol: step 2/2. Its function is as follows. Catalyzes the formation of phosphatidylethanolamine (PtdEtn) from phosphatidylserine (PtdSer). This chain is Phosphatidylserine decarboxylase proenzyme, found in Francisella tularensis subsp. mediasiatica (strain FSC147).